Reading from the N-terminus, the 228-residue chain is Cytidylate kinase (228 aa).

An ATP-binding site is contributed by glycine 17–threonine 25.

This sequence belongs to the cytidylate kinase family. Type 1 subfamily.

It is found in the cytoplasm. The enzyme catalyses CMP + ATP = CDP + ADP. It catalyses the reaction dCMP + ATP = dCDP + ADP. The chain is Cytidylate kinase from Paraburkholderia phymatum (strain DSM 17167 / CIP 108236 / LMG 21445 / STM815) (Burkholderia phymatum).